We begin with the raw amino-acid sequence, 182 residues long: Fucoxanthin-chlorophyll a-c binding protein D, chloroplastic (182 aa).

The transit peptide at 1–4 (AMKM) directs the protein to the chloroplast. Transmembrane regions (helical) follow at residues 46 to 66 (IAMLAIAGHLTQQNARLPGML), 87 to 107 (IPPGGLAQIFGFIGFLELAVM), and 148 to 168 (GRAAQMGILALMVHEELNNKP).

This sequence belongs to the fucoxanthin chlorophyll protein family. As to quaternary structure, the LHC complex of chromophytic algae is composed of fucoxanthin, chlorophyll A and C bound non-covalently by fucoxanthin chlorophyll proteins (FCPs). The ratio of pigments in this LHC is; fucoxanthin: chlorophyll C: chlorophyll A; (0.6-1): (0.1-0.3): (1).

Its subcellular location is the plastid. It localises to the chloroplast thylakoid membrane. In terms of biological role, the light-harvesting complex (LHC) functions as a light receptor, it captures and delivers excitation energy to photosystems with which it is closely associated. Energy is transferred from the carotenoid and chlorophyll C (or B) to chlorophyll A and the photosynthetic reaction centers where it is used to synthesize ATP and reducing power. This is Fucoxanthin-chlorophyll a-c binding protein D, chloroplastic (FCPD) from Macrocystis pyrifera (Giant kelp).